Reading from the N-terminus, the 163-residue chain is Large ribosomal subunit protein bL19 (163 aa).

Residues Ile131 to Pro150 are compositionally biased toward basic and acidic residues. Residues Ile131–Lys163 form a disordered region. Residues Gln151–Lys163 show a composition bias toward basic residues.

Belongs to the bacterial ribosomal protein bL19 family.

In terms of biological role, this protein is located at the 30S-50S ribosomal subunit interface and may play a role in the structure and function of the aminoacyl-tRNA binding site. The polypeptide is Large ribosomal subunit protein bL19 (Rhodospirillum rubrum (strain ATCC 11170 / ATH 1.1.1 / DSM 467 / LMG 4362 / NCIMB 8255 / S1)).